The primary structure comprises 123 residues: Small ribosomal subunit protein uS11 (123 aa).

This sequence belongs to the universal ribosomal protein uS11 family. In terms of assembly, part of the 30S ribosomal subunit. Interacts with proteins S7 and S18. Binds to IF-3.

In terms of biological role, located on the platform of the 30S subunit, it bridges several disparate RNA helices of the 16S rRNA. Forms part of the Shine-Dalgarno cleft in the 70S ribosome. The protein is Small ribosomal subunit protein uS11 of Coxiella burnetii (strain RSA 331 / Henzerling II).